The chain runs to 485 residues: Elongation factor TuB, chloroplastic (485 aa).

Residues Met1–Arg76 constitute a chloroplast transit peptide. Residues Lys86–Gln290 enclose the tr-type G domain. Residues Gly95–Thr102 are G1. A GTP-binding site is contributed by Gly95 to Thr102. The segment at Gly136–Asn140 is G2. A G3 region spans residues Asp157–Gly160. GTP contacts are provided by residues Asp157 to His161 and Asn212 to Asp215. Residues Asn212 to Asp215 form a G4 region. The tract at residues Ser250–Leu252 is G5.

Belongs to the TRAFAC class translation factor GTPase superfamily. Classic translation factor GTPase family. EF-Tu/EF-1A subfamily.

It localises to the plastid. Its subcellular location is the chloroplast. In terms of biological role, this protein promotes the GTP-dependent binding of aminoacyl-tRNA to the A-site of ribosomes during protein biosynthesis. This chain is Elongation factor TuB, chloroplastic (TUFB), found in Nicotiana sylvestris (Wood tobacco).